The chain runs to 226 residues: ATP synthase subunit a (226 aa).

Transmembrane regions (helical) follow at residues 17 to 37 (FNYLFHLILVAIIVLIVAKLA), 79 to 99 (LVATIGLIVLTSNVIGIIPGF), 105 to 125 (SLNLTLCLALSVFLYYNFEGI), 168 to 188 (FGNIKGDDLFLMVVLSLAPWV), and 200 to 222 (MALLQTFIFMILTYVYLAGAVVV).

It belongs to the ATPase A chain family. As to quaternary structure, F-type ATPases have 2 components, CF(1) - the catalytic core - and CF(0) - the membrane proton channel. CF(1) has five subunits: alpha(3), beta(3), gamma(1), delta(1), epsilon(1). CF(0) has three main subunits: a(1), b(2) and c(9-12). The alpha and beta chains form an alternating ring which encloses part of the gamma chain. CF(1) is attached to CF(0) by a central stalk formed by the gamma and epsilon chains, while a peripheral stalk is formed by the delta and b chains.

The protein resides in the cell inner membrane. Its function is as follows. Key component of the proton channel; it plays a direct role in the translocation of protons across the membrane. This chain is ATP synthase subunit a, found in Campylobacter fetus subsp. fetus (strain 82-40).